The sequence spans 741 residues: NAD(P)H-quinone oxidoreductase subunit 5, chloroplastic (741 aa).

Helical transmembrane passes span 9–29 (WIIPFLPLPVPMLIGLGLLLF), 40–60 (WAFQSVLLLSIVMIFSMNLSI), 89–109 (IDPLTSIMSILITTVGILVLI), 125–145 (FAYMSFFSTSMLGLVTSSNLI), 147–167 (IYIFWELVGMCSYLLIGFWFT), 185–205 (GDFGLLLGILGFYWITGSFEF), 219–239 (NQVNFLFVTLCAVLLFAGAIA), 258–278 (TPISALIHAATMVAAGIFLVA), 289–311 (HIMNFISLIGIITVFLGATLALA), 327–347 (LGYMMLALGMGSYRSALFHLI), 354–374 (ALLFLGSGSVIHSMETLVGYC), 396–416 (NSFLLGTLSLCGIPPLACFWS), 425–445 (WLYSPIFAIIAWSTAGLTAFY), 549–569 (LFPILILFIFTLFVGFLGIPL), 605–625 (LFSVSIASFGIFIAFFLYKPV), and 721–741 (YLFFYFSYVSIFLVIYYFLNL).

The protein belongs to the complex I subunit 5 family. NDH is composed of at least 16 different subunits, 5 of which are encoded in the nucleus.

The protein localises to the plastid. Its subcellular location is the chloroplast thylakoid membrane. It carries out the reaction a plastoquinone + NADH + (n+1) H(+)(in) = a plastoquinol + NAD(+) + n H(+)(out). It catalyses the reaction a plastoquinone + NADPH + (n+1) H(+)(in) = a plastoquinol + NADP(+) + n H(+)(out). Functionally, NDH shuttles electrons from NAD(P)H:plastoquinone, via FMN and iron-sulfur (Fe-S) centers, to quinones in the photosynthetic chain and possibly in a chloroplast respiratory chain. The immediate electron acceptor for the enzyme in this species is believed to be plastoquinone. Couples the redox reaction to proton translocation, and thus conserves the redox energy in a proton gradient. This Symphyotrichum cordifolium (Heart-leaved aster) protein is NAD(P)H-quinone oxidoreductase subunit 5, chloroplastic (ndhF).